Consider the following 357-residue polypeptide: MDSPELTLRERQVLGIVIQSYVVSAAPVGSRYIARNYNLGLSDATIRNVMADLEREGFISQPHTSAGRVPTDKGYRYYVDLIMHVQRINDEEKRRIDADFGQLTCERKGTSTEVLFSAAKVLGTISRQLSVVLSPAFSNAVFEKLDMVLLSSSRMMVILSIRSLFLRTIVMELDIEVSRQMVDDVVAVLNERLSGLTLVEIRRTLVVRLSDCTCDSALLDRIVRSSGELFDETPMIERLYISGAEYIIDQPEFKQPEKVRDLISMIEDKTSVAKLVDDATAAVEAVKPQGMDVSITIGKENIERKAGELTILSTPYYVGDMVGKLGILGPTRMDYEHAVRVLNYMADCLSTTLSEVP.

Belongs to the HrcA family.

Functionally, negative regulator of class I heat shock genes (grpE-dnaK-dnaJ and groELS operons). Prevents heat-shock induction of these operons. The protein is Heat-inducible transcription repressor HrcA of Chlorobium limicola (strain DSM 245 / NBRC 103803 / 6330).